The chain runs to 249 residues: Aspartate/glutamate leucyltransferase (249 aa).

The protein belongs to the R-transferase family. Bpt subfamily.

The protein localises to the cytoplasm. The enzyme catalyses N-terminal L-glutamyl-[protein] + L-leucyl-tRNA(Leu) = N-terminal L-leucyl-L-glutamyl-[protein] + tRNA(Leu) + H(+). It carries out the reaction N-terminal L-aspartyl-[protein] + L-leucyl-tRNA(Leu) = N-terminal L-leucyl-L-aspartyl-[protein] + tRNA(Leu) + H(+). In terms of biological role, functions in the N-end rule pathway of protein degradation where it conjugates Leu from its aminoacyl-tRNA to the N-termini of proteins containing an N-terminal aspartate or glutamate. The chain is Aspartate/glutamate leucyltransferase from Brucella abortus (strain 2308).